Here is a 201-residue protein sequence, read N- to C-terminus: Recombination protein RecR (201 aa).

The C4-type zinc finger occupies 60–75; it reads CSVCGNVDTTDPCSIC. The 96-residue stretch at 83 to 178 folds into the Toprim domain; it reads TTIIVVEDVA…KITRLAHGVP (96 aa).

This sequence belongs to the RecR family.

Its function is as follows. May play a role in DNA repair. It seems to be involved in an RecBC-independent recombinational process of DNA repair. It may act with RecF and RecO. The chain is Recombination protein RecR from Bartonella quintana (strain Toulouse) (Rochalimaea quintana).